The sequence spans 207 residues: Holliday junction branch migration complex subunit RuvA (207 aa).

A domain I region spans residues 1–64 (MIGRLTGILA…ETSQQLFGFS (64 aa)). Positions 65 to 142 (SQQDRELFRM…ALDTTPSEHS (78 aa)) are domain II. The flexible linker stretch occupies residues 143–157 (PTGEGAGIVRVDPVI). Positions 158-207 (NTNVIIADAESALIGLGYKPTEAAKAVSAAYNDTITTSEDLIRAALKGMI) are domain III.

It belongs to the RuvA family. Homotetramer. Forms an RuvA(8)-RuvB(12)-Holliday junction (HJ) complex. HJ DNA is sandwiched between 2 RuvA tetramers; dsDNA enters through RuvA and exits via RuvB. An RuvB hexamer assembles on each DNA strand where it exits the tetramer. Each RuvB hexamer is contacted by two RuvA subunits (via domain III) on 2 adjacent RuvB subunits; this complex drives branch migration. In the full resolvosome a probable DNA-RuvA(4)-RuvB(12)-RuvC(2) complex forms which resolves the HJ.

It localises to the cytoplasm. The RuvA-RuvB-RuvC complex processes Holliday junction (HJ) DNA during genetic recombination and DNA repair, while the RuvA-RuvB complex plays an important role in the rescue of blocked DNA replication forks via replication fork reversal (RFR). RuvA specifically binds to HJ cruciform DNA, conferring on it an open structure. The RuvB hexamer acts as an ATP-dependent pump, pulling dsDNA into and through the RuvAB complex. HJ branch migration allows RuvC to scan DNA until it finds its consensus sequence, where it cleaves and resolves the cruciform DNA. The chain is Holliday junction branch migration complex subunit RuvA from Saccharophagus degradans (strain 2-40 / ATCC 43961 / DSM 17024).